The following is a 400-amino-acid chain: Enoyl-[acyl-carrier-protein] reductase [NADH] (400 aa).

NAD(+) is bound by residues 48-53 (GSSSGY), 74-75 (FE), 111-112 (DA), and 139-140 (LA). Position 225 (Tyr-225) interacts with substrate. Tyr-235 (proton donor) is an active-site residue. NAD(+)-binding positions include Lys-244 and 273 to 275 (VVT).

The protein belongs to the TER reductase family. Monomer.

It carries out the reaction a 2,3-saturated acyl-[ACP] + NAD(+) = a (2E)-enoyl-[ACP] + NADH + H(+). It participates in lipid metabolism; fatty acid biosynthesis. In terms of biological role, involved in the final reduction of the elongation cycle of fatty acid synthesis (FAS II). Catalyzes the reduction of a carbon-carbon double bond in an enoyl moiety that is covalently linked to an acyl carrier protein (ACP). In Aliivibrio fischeri (strain ATCC 700601 / ES114) (Vibrio fischeri), this protein is Enoyl-[acyl-carrier-protein] reductase [NADH].